Reading from the N-terminus, the 477-residue chain is Protein nucleotidyltransferase YdiU (477 aa).

ATP-binding residues include Gly89, Gly91, Arg92, Lys112, Asp124, Gly125, Arg178, and Arg185. The active-site Proton acceptor is the Asp257. Residues Asn258 and Asp267 each coordinate Mg(2+). Asp267 provides a ligand contact to ATP.

Belongs to the SELO family. It depends on Mg(2+) as a cofactor. Requires Mn(2+) as cofactor.

It catalyses the reaction L-seryl-[protein] + ATP = 3-O-(5'-adenylyl)-L-seryl-[protein] + diphosphate. The enzyme catalyses L-threonyl-[protein] + ATP = 3-O-(5'-adenylyl)-L-threonyl-[protein] + diphosphate. The catalysed reaction is L-tyrosyl-[protein] + ATP = O-(5'-adenylyl)-L-tyrosyl-[protein] + diphosphate. It carries out the reaction L-histidyl-[protein] + UTP = N(tele)-(5'-uridylyl)-L-histidyl-[protein] + diphosphate. It catalyses the reaction L-seryl-[protein] + UTP = O-(5'-uridylyl)-L-seryl-[protein] + diphosphate. The enzyme catalyses L-tyrosyl-[protein] + UTP = O-(5'-uridylyl)-L-tyrosyl-[protein] + diphosphate. Functionally, nucleotidyltransferase involved in the post-translational modification of proteins. It can catalyze the addition of adenosine monophosphate (AMP) or uridine monophosphate (UMP) to a protein, resulting in modifications known as AMPylation and UMPylation. This chain is Protein nucleotidyltransferase YdiU, found in Synechocystis sp. (strain ATCC 27184 / PCC 6803 / Kazusa).